Consider the following 228-residue polypeptide: Probable septum site-determining protein MinC (228 aa).

The protein belongs to the MinC family. In terms of assembly, interacts with MinD and FtsZ.

Its function is as follows. Cell division inhibitor that blocks the formation of polar Z ring septums. Rapidly oscillates between the poles of the cell to destabilize FtsZ filaments that have formed before they mature into polar Z rings. Prevents FtsZ polymerization. This Oceanobacillus iheyensis (strain DSM 14371 / CIP 107618 / JCM 11309 / KCTC 3954 / HTE831) protein is Probable septum site-determining protein MinC.